The sequence spans 520 residues: uncharacterized protein (520 aa).

Helical transmembrane passes span 38 to 58 (VVLI…IPGG), 84 to 104 (IAIY…GIFN), 105 to 125 (IGIS…ILKV), 138 to 158 (IITV…VATL), 167 to 187 (VVSA…LVET), 220 to 240 (FGWL…AVVL), 271 to 291 (FLSF…VYTA), 318 to 338 (IAIG…SVLI), and 355 to 375 (ASLV…MVYF).

Its subcellular location is the cell membrane. This is an uncharacterized protein from Mycoplasma genitalium (strain ATCC 33530 / DSM 19775 / NCTC 10195 / G37) (Mycoplasmoides genitalium).